The sequence spans 105 residues: Small ribosomal subunit protein uS10 (105 aa).

It belongs to the universal ribosomal protein uS10 family. As to quaternary structure, part of the 30S ribosomal subunit.

Functionally, involved in the binding of tRNA to the ribosomes. The chain is Small ribosomal subunit protein uS10 from Roseobacter denitrificans (strain ATCC 33942 / OCh 114) (Erythrobacter sp. (strain OCh 114)).